Consider the following 213-residue polypeptide: FMN-dependent NADH:quinone oxidoreductase (213 aa).

S10 contributes to the FMN binding site.

The protein belongs to the azoreductase type 1 family. As to quaternary structure, homodimer. FMN is required as a cofactor.

It carries out the reaction 2 a quinone + NADH + H(+) = 2 a 1,4-benzosemiquinone + NAD(+). The catalysed reaction is N,N-dimethyl-1,4-phenylenediamine + anthranilate + 2 NAD(+) = 2-(4-dimethylaminophenyl)diazenylbenzoate + 2 NADH + 2 H(+). In terms of biological role, quinone reductase that provides resistance to thiol-specific stress caused by electrophilic quinones. Functionally, also exhibits azoreductase activity. Catalyzes the reductive cleavage of the azo bond in aromatic azo compounds to the corresponding amines. The protein is FMN-dependent NADH:quinone oxidoreductase of Opitutus terrae (strain DSM 11246 / JCM 15787 / PB90-1).